The primary structure comprises 500 residues: Probable serine carboxypeptidase CPVL (500 aa).

An N-terminal signal peptide occupies residues 1–23; it reads MKVSLSFLLTILIVIITIKVNLS. N-linked (GlcNAc...) asparagine glycans are attached at residues Asn110 and Asn161. Residue Ser233 is part of the active site. Residues Asn333 and Asn360 are each glycosylated (N-linked (GlcNAc...) asparagine). Active-site residues include Asp414 and His474.

The protein belongs to the peptidase S10 family.

It localises to the secreted. Its function is as follows. May be involved in the digestion of phagocytosed particles in the lysosome, participation in an inflammatory protease cascade, and trimming of peptides for antigen presentation. The chain is Probable serine carboxypeptidase CPVL (cpvl) from Dictyostelium discoideum (Social amoeba).